Here is a 371-residue protein sequence, read N- to C-terminus: Putative glutamate--cysteine ligase 2 (371 aa).

It belongs to the glutamate--cysteine ligase type 2 family. YbdK subfamily.

It carries out the reaction L-cysteine + L-glutamate + ATP = gamma-L-glutamyl-L-cysteine + ADP + phosphate + H(+). Functionally, ATP-dependent carboxylate-amine ligase which exhibits weak glutamate--cysteine ligase activity. This chain is Putative glutamate--cysteine ligase 2, found in Burkholderia thailandensis (strain ATCC 700388 / DSM 13276 / CCUG 48851 / CIP 106301 / E264).